The sequence spans 69 residues: Large ribosomal subunit protein bL28 (69 aa).

It belongs to the bacterial ribosomal protein bL28 family.

This Nitratidesulfovibrio vulgaris (strain DSM 19637 / Miyazaki F) (Desulfovibrio vulgaris) protein is Large ribosomal subunit protein bL28.